Reading from the N-terminus, the 374-residue chain is Ribosomal RNA large subunit methyltransferase G (374 aa).

This sequence belongs to the methyltransferase superfamily. RlmG family.

The protein localises to the cytoplasm. The catalysed reaction is guanosine(1835) in 23S rRNA + S-adenosyl-L-methionine = N(2)-methylguanosine(1835) in 23S rRNA + S-adenosyl-L-homocysteine + H(+). Functionally, specifically methylates the guanine in position 1835 (m2G1835) of 23S rRNA. This is Ribosomal RNA large subunit methyltransferase G from Pseudomonas putida (strain W619).